Reading from the N-terminus, the 425-residue chain is Serine hydroxymethyltransferase (425 aa).

(6S)-5,6,7,8-tetrahydrofolate-binding positions include Leu123 and 127–129 (GHL). Lys232 is modified (N6-(pyridoxal phosphate)lysine). Glu248 contributes to the (6S)-5,6,7,8-tetrahydrofolate binding site.

It belongs to the SHMT family. Homodimer. Pyridoxal 5'-phosphate is required as a cofactor.

It is found in the cytoplasm. It catalyses the reaction (6R)-5,10-methylene-5,6,7,8-tetrahydrofolate + glycine + H2O = (6S)-5,6,7,8-tetrahydrofolate + L-serine. It functions in the pathway one-carbon metabolism; tetrahydrofolate interconversion. The protein operates within amino-acid biosynthesis; glycine biosynthesis; glycine from L-serine: step 1/1. In terms of biological role, catalyzes the reversible interconversion of serine and glycine with tetrahydrofolate (THF) serving as the one-carbon carrier. This reaction serves as the major source of one-carbon groups required for the biosynthesis of purines, thymidylate, methionine, and other important biomolecules. Also exhibits THF-independent aldolase activity toward beta-hydroxyamino acids, producing glycine and aldehydes, via a retro-aldol mechanism. In Anaplasma phagocytophilum (strain HZ), this protein is Serine hydroxymethyltransferase.